We begin with the raw amino-acid sequence, 361 residues long: Zinc transporter ZIP13 (361 aa).

Over 1-6 the chain is Lumenal; the sequence is MPGCPC. A helical membrane pass occupies residues 7 to 27; it reads PGCGMAGQRLLFLTVLALELL. Residues 28 to 68 lie on the Cytoplasmic side of the membrane; the sequence is ERAGGSQPALRSLGAAAACRLDNKESESWGALLSGERLDTW. Residues 69 to 89 form a helical membrane-spanning segment; the sequence is ICSLLGSLMVGLSGVFPLLVI. Residues 90-108 are Lumenal-facing; the sequence is PLEMGTLLQSEAGAWRLRQ. A helical transmembrane segment spans residues 109 to 129; that stretch reads LLSFALGGLLGNVFLHLLPEA. Topologically, residues 130–150 are cytoplasmic; sequence WAYTCNITPGGEGQSLQRQQQ. Residues 151-171 form a helical membrane-spanning segment; sequence LGLWVIAGFLTFLALEKMFLN. Residues 172–232 lie on the Lumenal side of the membrane; that stretch reads SKEDPSQAPS…TIDNFTHGLA (61 aa). Residues 233-253 traverse the membrane as a helical segment; it reads VAASFLVSKKIGLLTTMAILL. The XEXPHE-motif motif lies at 254-259; the sequence is HEIPHE. Topologically, residues 254 to 275 are cytoplasmic; it reads HEIPHEVGDFAILLRAGFDRWT. A helical transmembrane segment spans residues 276–296; it reads AAKLQFSTALGGLLGACFAIC. The Lumenal segment spans residues 297 to 306; it reads TQSPKGVEET. The helical transmembrane segment at 307-327 threads the bilayer; sequence VVWILPFTSGGFLYIALVNVL. Residues 328-339 lie on the Cytoplasmic side of the membrane; it reads PDLLEEDDPWHS. Residues 340 to 360 traverse the membrane as a helical segment; that stretch reads LQQVLLLCSGVLVMVLLSLFV. A topological domain (lumenal) is located at residue glutamate 361.

Belongs to the ZIP transporter (TC 2.A.5) family. Homodimer. As to expression, highly expressed in some tissues such as bone and eye. Expressed in osteoblasts of tibia and of alveolar bone, in proliferative zone of growth plate, and in odontoblasts on the forming of the dentine of crown in molar tooth. Also expressed fibroblasts in reticular layer of dermis of skin.

The protein localises to the golgi apparatus membrane. It localises to the cytoplasmic vesicle membrane. Its subcellular location is the endoplasmic reticulum membrane. The enzyme catalyses Zn(2+)(in) = Zn(2+)(out). In terms of biological role, functions as a zinc transporter transporting Zn(2+) from the Golgi apparatus to the cytosol and thus influences the zinc level at least in areas of the cytosol. May regulate beige adipocyte differentiation. This chain is Zinc transporter ZIP13, found in Mus musculus (Mouse).